The chain runs to 788 residues: Cyclin-F (788 aa).

Positions 20–28 (KRRIRRRPR) match the Nuclear localization signal 1 motif. The region spanning 29–76 (NLTILNLPEDALFHILKWLSVGDILAVRAVHSHLKYLVDNHASVWACA) is the F-box domain. Residues 291-405 (HAVNKQRVFS…EVVSALDGKI (115 aa)) form the Cyclin N-terminal domain. 4 consecutive short sequence motifs (d box) follow at residues 310–313 (RYIL), 343–346 (RRRL), 349–352 (RYRL), and 351–354 (RLQL). Disordered regions lie at residues 566 to 585 (SARR…RGSF) and 700 to 788 (TSGY…FLKL). The Nuclear localization signal 2 signature appears at 568–574 (RRTKRKR). The tract at residues 582-766 (RGSFVTTPTA…ESCAPQQQVK (185 aa)) is PEST. Composition is skewed to polar residues over residues 700–716 (TSGY…DSGR) and 723–738 (RSTS…NTQP). The D box 5 signature appears at 767–770 (RKNL).

Belongs to the cyclin family. Cyclin AB subfamily. As to quaternary structure, component of the SCF(CCNF) complex consisting of CUL1, RBX1, SKP1 and CCNF. Interacts with SKP1. Interacts with CUL1. Interacts with CCNB1; interaction is required for nuclear localization of CCNB1. Interacts with CCP110; this interaction leads to CCP110 ubiquitination and degradation via the proteasome pathway. Interacts (via the Cyclin N-terminal domain) with MYBL2/BMYB. Interacts with FZR1/CDH1 (via N-terminus). Interacts with RRM2 (via Cy motif and when phosphorylated at 'Thr-33'); the interaction occurs exclusively in G2 and early M. Interacts with CDC6 (via Cy motif); the interaction takes place during G2 and M phase. Degraded when the spindle assembly checkpoint is activated during the G2-M transition. Degradation is not dependent on the proteasome or ubiquitin and depends on the C-terminal PEST sequence. Post-translationally, phosphorylated just before cells enter into mitosis. In terms of processing, ubiquitinated by the anaphase-promoting complex (APC/C); leading to its degradation by the proteasome.

The protein localises to the nucleus. Its subcellular location is the cytoplasm. The protein resides in the perinuclear region. It is found in the cytoskeleton. It localises to the microtubule organizing center. The protein localises to the centrosome. Its subcellular location is the centriole. Functionally, substrate recognition component of a SCF (SKP1-CUL1-F-box protein) E3 ubiquitin-protein ligase complex which mediates the ubiquitination and subsequent proteasomal degradation of target proteins. The SCF(CCNF) E3 ubiquitin-protein ligase complex is an integral component of the ubiquitin proteasome system (UPS) and links proteasome degradation to the cell cycle. Mediates the substrate recognition and the proteasomal degradation of various target proteins involved in the regulation of cell cycle progression and in the maintenance of genome stability. Mediates the ubiquitination and subsequent proteasomal degradation of CP110 during G2 phase, thereby acting as an inhibitor of centrosome reduplication. In G2, mediates the ubiquitination and proteasomal degradation of CDC6, thereby suppressing DNA re-replication and preventing genome instability. Involved in the ubiquitination and degradation of the substrate adapter CDH1 of the anaphase-promoting complex (APC/C), thereby acting as an antagonist of APC/C in regulating G1 progression and S phase entry. May play a role in the G2 cell cycle checkpoint control after DNA damage, possibly by promoting the ubiquitination of MYBL2/BMYB. The protein is Cyclin-F (CCNF) of Bos taurus (Bovine).